The sequence spans 635 residues: Threonine--tRNA ligase (635 aa).

Residues 1-61 enclose the TGS domain; it reads MIQITLPDSS…SQDSALSIVT (61 aa). The catalytic stretch occupies residues 242–533; that stretch reads DHRKLGKELD…LIEEHAGALP (292 aa). Zn(2+)-binding residues include cysteine 333, histidine 384, and histidine 510.

Belongs to the class-II aminoacyl-tRNA synthetase family. Homodimer. Zn(2+) is required as a cofactor.

It localises to the cytoplasm. The catalysed reaction is tRNA(Thr) + L-threonine + ATP = L-threonyl-tRNA(Thr) + AMP + diphosphate + H(+). In terms of biological role, catalyzes the attachment of threonine to tRNA(Thr) in a two-step reaction: L-threonine is first activated by ATP to form Thr-AMP and then transferred to the acceptor end of tRNA(Thr). Also edits incorrectly charged L-seryl-tRNA(Thr). The sequence is that of Threonine--tRNA ligase from Polaromonas naphthalenivorans (strain CJ2).